The sequence spans 113 residues: MAGPAAAFRRLGALSGAAALGFASYGAHGAQFPDAYGKELFDKANKHHFLHSLALLGVPHCRKPLWAGLLLASGTTLFCTSFYYQALSGDPSIQTLAPAGGTLLLLGWLALAL.

An N-terminal signal peptide occupies residues 1–29; the sequence is MAGPAAAFRRLGALSGAAALGFASYGAHG. Over 30–63 the chain is Extracellular; sequence AQFPDAYGKELFDKANKHHFLHSLALLGVPHCRK. Position 43 is an N6-acetyllysine (Lys-43). Residues 64 to 84 traverse the membrane as a helical segment; that stretch reads PLWAGLLLASGTTLFCTSFYY. Topologically, residues 85 to 92 are cytoplasmic; that stretch reads QALSGDPS. The chain crosses the membrane as a helical span at residues 93–113; it reads IQTLAPAGGTLLLLGWLALAL.

It belongs to the TMEM256 family.

It localises to the membrane. This is Transmembrane protein 256 (TMEM256) from Homo sapiens (Human).